A 307-amino-acid chain; its full sequence is Glutaminase (307 aa).

S66, N116, E160, N167, Y191, Y243, and V261 together coordinate substrate.

It belongs to the glutaminase family. Homotetramer.

The catalysed reaction is L-glutamine + H2O = L-glutamate + NH4(+). This Pseudoalteromonas translucida (strain TAC 125) protein is Glutaminase.